The chain runs to 185 residues: Coordinator of PRMT5 and differentiation stimulator (185 aa).

Residue Met-1 is modified to N-acetylmethionine. Positions 1–109 (MDPPTAGAQS…MSGCLPKEQA (109 aa)) are disordered. 2 stretches are compositionally biased toward basic and acidic residues: residues 42–52 (SSQEKATENAT) and 66–77 (SPAHGEGTHCEE). Residue Ser-66 is modified to Phosphoserine. Residues 78-89 (EGFAEDDEDSDG) are compositionally biased toward acidic residues.

As to quaternary structure, interacts with PRMT5. Interacts with histone H4; specifically interacts with the N-terminus of histone H4 but not with histone H3. Interacts with CBFB. Found in a complex with PRMT5, RUNX1 and CBFB.

Its subcellular location is the nucleus. Functionally, histone-binding protein required for histone H4 methyltransferase activity of PRMT5. Specifically required for histone H4 'Arg-3' methylation mediated by PRMT5, but not histone H3 'Arg-8' methylation, suggesting that it modulates the substrate specificity of PRMT5. Specifically interacts with the N-terminus of histone H4 but not with histone H3, suggesting that it acts by promoting the association between histone H4 and PRMT5. Involved in CCNE1 promoter repression. Plays a role in muscle cell differentiation by modulating the recruitment of PRMT5 to the promoter of genes involved in the coordination between cell cycle exit and muscle differentiation. The chain is Coordinator of PRMT5 and differentiation stimulator (COPRS) from Bos taurus (Bovine).